A 349-amino-acid chain; its full sequence is Phosphoribosylformylglycinamidine cyclo-ligase (349 aa).

The protein belongs to the AIR synthase family.

The protein localises to the cytoplasm. It carries out the reaction 2-formamido-N(1)-(5-O-phospho-beta-D-ribosyl)acetamidine + ATP = 5-amino-1-(5-phospho-beta-D-ribosyl)imidazole + ADP + phosphate + H(+). It functions in the pathway purine metabolism; IMP biosynthesis via de novo pathway; 5-amino-1-(5-phospho-D-ribosyl)imidazole from N(2)-formyl-N(1)-(5-phospho-D-ribosyl)glycinamide: step 2/2. This chain is Phosphoribosylformylglycinamidine cyclo-ligase, found in Trichlorobacter lovleyi (strain ATCC BAA-1151 / DSM 17278 / SZ) (Geobacter lovleyi).